We begin with the raw amino-acid sequence, 284 residues long: Phosphatidylserine decarboxylase proenzyme (284 aa).

Residues D88, H145, and S248 each act as charge relay system; for autoendoproteolytic cleavage activity in the active site. S248 functions as the Schiff-base intermediate with substrate; via pyruvic acid; for decarboxylase activity in the catalytic mechanism. S248 carries the post-translational modification Pyruvic acid (Ser); by autocatalysis.

The protein belongs to the phosphatidylserine decarboxylase family. PSD-B subfamily. Prokaryotic type I sub-subfamily. As to quaternary structure, heterodimer of a large membrane-associated beta subunit and a small pyruvoyl-containing alpha subunit. The cofactor is pyruvate. In terms of processing, is synthesized initially as an inactive proenzyme. Formation of the active enzyme involves a self-maturation process in which the active site pyruvoyl group is generated from an internal serine residue via an autocatalytic post-translational modification. Two non-identical subunits are generated from the proenzyme in this reaction, and the pyruvate is formed at the N-terminus of the alpha chain, which is derived from the carboxyl end of the proenzyme. The autoendoproteolytic cleavage occurs by a canonical serine protease mechanism, in which the side chain hydroxyl group of the serine supplies its oxygen atom to form the C-terminus of the beta chain, while the remainder of the serine residue undergoes an oxidative deamination to produce ammonia and the pyruvoyl prosthetic group on the alpha chain. During this reaction, the Ser that is part of the protease active site of the proenzyme becomes the pyruvoyl prosthetic group, which constitutes an essential element of the active site of the mature decarboxylase.

Its subcellular location is the cell membrane. It carries out the reaction a 1,2-diacyl-sn-glycero-3-phospho-L-serine + H(+) = a 1,2-diacyl-sn-glycero-3-phosphoethanolamine + CO2. It functions in the pathway phospholipid metabolism; phosphatidylethanolamine biosynthesis; phosphatidylethanolamine from CDP-diacylglycerol: step 2/2. In terms of biological role, catalyzes the formation of phosphatidylethanolamine (PtdEtn) from phosphatidylserine (PtdSer). This Albidiferax ferrireducens (strain ATCC BAA-621 / DSM 15236 / T118) (Rhodoferax ferrireducens) protein is Phosphatidylserine decarboxylase proenzyme.